Here is a 207-residue protein sequence, read N- to C-terminus: MADS-box protein AGL71 (207 aa).

Residues 1–61 enclose the MADS-box domain; the sequence is MVRGKIEIKK…GRLHEYSSSQ (61 aa). A K-box domain is found at 88–178; that stretch reads LQELKMEIDR…LEEVNMHHSS (91 aa).

It localises to the nucleus. Functionally, MADS-box transcription factor that acts with AGL42 and AGL72 in the control of flowering time. Promotes flowering at the shoot apical and axillary meristems. Seems to act through a gibberellin-dependent pathway. Interacts genetically with SOC1 and its expression is directly regulated by SOC1. The sequence is that of MADS-box protein AGL71 (AGL71) from Arabidopsis thaliana (Mouse-ear cress).